We begin with the raw amino-acid sequence, 23 residues long: Hemocyanin subunit 1 (23 aa).

Residues 1–23 form a disordered region; sequence DSPGGASDTQKQHXVNSXXXKXY.

The protein belongs to the tyrosinase family. Hemocyanin subfamily. Hemolymph.

Its subcellular location is the secreted. It is found in the extracellular space. Functionally, hemocyanins are copper-containing oxygen carriers occurring freely dissolved in the hemolymph of many mollusks and arthropods. The chain is Hemocyanin subunit 1 from Cancer pagurus (Rock crab).